Consider the following 121-residue polypeptide: Small ribosomal subunit protein uS13 (121 aa).

The interval 96-121 (PVRGQNTKNNARTRKGKAVAIAGKKK) is disordered. The segment covering 106 to 121 (ARTRKGKAVAIAGKKK) has biased composition (basic residues).

This sequence belongs to the universal ribosomal protein uS13 family. Part of the 30S ribosomal subunit. Forms a loose heterodimer with protein S19. Forms two bridges to the 50S subunit in the 70S ribosome.

Functionally, located at the top of the head of the 30S subunit, it contacts several helices of the 16S rRNA. In the 70S ribosome it contacts the 23S rRNA (bridge B1a) and protein L5 of the 50S subunit (bridge B1b), connecting the 2 subunits; these bridges are implicated in subunit movement. Contacts the tRNAs in the A and P-sites. The polypeptide is Small ribosomal subunit protein uS13 (Streptococcus suis (strain 05ZYH33)).